The following is a 384-amino-acid chain: MAP kinase-activated protein kinase 3 (384 aa).

Met1 bears the N-acetylmethionine mark. Residues 1 to 33 (MDGETAGEKGSLVPQPGALGAPALGGAPAPGVR) form a disordered region. A compositionally biased stretch (low complexity) spans 14-31 (PQPGALGAPALGGAPAPG). Positions 46 to 306 (QLSKQVLGLG…IMQFMNHPWI (261 aa)) constitute a Protein kinase domain. ATP contacts are provided by residues 52 to 60 (LGLGVNGKV) and Lys75. The active-site Proton acceptor is Asp168. Thr203 is subject to Phosphothreonine; by MAPK14. A Phosphoserine; by MAPK14 modification is found at Ser253. A Phosphoserine; by autocatalysis modification is found at Ser309. Residues 309 to 345 (SMEVPQTPLHTARVLEEDKDHWDDVKEEMTSALATMR) form an autoinhibitory helix region. Residue Thr315 is modified to Phosphothreonine; by MAPK14. The Nuclear export signal (NES) motif lies at 337-346 (MTSALATMRV). Positions 347–371 (DYDQVKIKDLKTSNNRLLNKRRKKQ) are p38 MAPK-binding site. Short sequence motifs (bipartite nuclear localization signal) lie at residues 352–355 (KIKD) and 366–370 (KRRKK). A disordered region spans residues 359-384 (SNNRLLNKRRKKQGGSSSASPGCNNQ). The span at 372-384 (GGSSSASPGCNNQ) shows a compositional bias: polar residues.

This sequence belongs to the protein kinase superfamily. CAMK Ser/Thr protein kinase family. Heterodimer with p38-alpha/MAPK14. The heterodimer with p38-alpha/MAPK14 forms a stable complex: molecules are positioned 'face to face' so that the ATP-binding sites of both kinases are at the heterodimer interface. Interacts with TCF3 and with polycomb proteins, such as PCH2 and BMI1/PCGF4. In terms of processing, phosphorylated and activated by MAPK1/ERK2 and MAPK3/ERK1. Phosphorylated and activated by MAP kinase p38-alpha/MAPK14 at Thr-203, Ser-253 and Thr-315.

The protein resides in the nucleus. It is found in the cytoplasm. The catalysed reaction is L-seryl-[protein] + ATP = O-phospho-L-seryl-[protein] + ADP + H(+). It carries out the reaction L-threonyl-[protein] + ATP = O-phospho-L-threonyl-[protein] + ADP + H(+). Its activity is regulated as follows. Activated following phosphorylation by p38-alpha/MAPK14 following various stresses. Inhibited by ligand 5B (2'-[2-(1,3-benzodioxol-5-yl)pyrimidin-4-yl]-5',6'-dihydrospiro[piperidine-4,7'-pyrrolo[3,2-c]pyridin]- 4'(1'h)-one) and ligand P4O (2-[2-(2-fluorophenyl)pyridin-4-yl]-1,5,6,7-tetrahydro- 4h-pyrrolo[3,2-c]pyridin-4-one), 2 ATP-competitive inhibitors. Stress-activated serine/threonine-protein kinase involved in cytokines production, endocytosis, cell migration, chromatin remodeling and transcriptional regulation. Following stress, it is phosphorylated and activated by MAP kinase p38-alpha/MAPK14, leading to phosphorylation of substrates. Phosphorylates serine in the peptide sequence, Hyd-X-R-X(2)-S, where Hyd is a large hydrophobic residue. MAPKAPK2 and MAPKAPK3, share the same function and substrate specificity, but MAPKAPK3 kinase activity and level in protein expression are lower compared to MAPKAPK2. Phosphorylates HSP27/HSPB1, KRT18, KRT20, RCSD1, RPS6KA3, TAB3 and TTP/ZFP36. Mediates phosphorylation of HSP27/HSPB1 in response to stress, leading to dissociate HSP27/HSPB1 from large small heat-shock protein (sHsps) oligomers and impair their chaperone activities and ability to protect against oxidative stress effectively. Involved in inflammatory response by regulating tumor necrosis factor (TNF) and IL6 production post-transcriptionally: acts by phosphorylating AU-rich elements (AREs)-binding proteins, such as TTP/ZFP36, leading to regulate the stability and translation of TNF and IL6 mRNAs. Phosphorylation of TTP/ZFP36, a major post-transcriptional regulator of TNF, promotes its binding to 14-3-3 proteins and reduces its ARE mRNA affinity leading to inhibition of dependent degradation of ARE-containing transcript. Involved in toll-like receptor signaling pathway (TLR) in dendritic cells: required for acute TLR-induced macropinocytosis by phosphorylating and activating RPS6KA3. Also acts as a modulator of Polycomb-mediated repression. The polypeptide is MAP kinase-activated protein kinase 3 (Mapkapk3) (Rattus norvegicus (Rat)).